The chain runs to 1067 residues: Carbamoyl phosphate synthase large chain (1067 aa).

Positions 1-401 (MPLNKDIKKV…AFLKGIRSLE (401 aa)) are carboxyphosphate synthetic domain. Residues R129, R169, G175, G176, K208, V210, E215, G241, I242, H243, Q284, and E298 each coordinate ATP. The 195-residue stretch at 133 to 327 (RDMMNRINQP…IAKVAAKIAL (195 aa)) folds into the ATP-grasp 1 domain. Positions 284, 298, and 300 each coordinate Mg(2+). Q284, E298, and N300 together coordinate Mn(2+). Residues 402–549 (IGKYSLEHKK…YSTYEQYDEV (148 aa)) form an oligomerization domain region. Positions 550–932 (VVSDNKKVVV…ALYKGFVGAS (383 aa)) are carbamoyl phosphate synthetic domain. Positions 674–864 (DDLLERLNIA…IVDIATRIML (191 aa)) constitute an ATP-grasp 2 domain. Residues R710, K749, L751, E755, G780, V781, H782, S783, Q823, and E835 each contribute to the ATP site. Mg(2+) is bound by residues Q823, E835, and N837. Mn(2+) is bound by residues Q823, E835, and N837. The MGS-like domain maps to 933-1067 (MYTGDKGKTI…NRELEVFNLI (135 aa)). The allosteric domain stretch occupies residues 933 to 1067 (MYTGDKGKTI…NRELEVFNLI (135 aa)).

This sequence belongs to the CarB family. Composed of two chains; the small (or glutamine) chain promotes the hydrolysis of glutamine to ammonia, which is used by the large (or ammonia) chain to synthesize carbamoyl phosphate. Tetramer of heterodimers (alpha,beta)4. Mg(2+) serves as cofactor. It depends on Mn(2+) as a cofactor.

The catalysed reaction is hydrogencarbonate + L-glutamine + 2 ATP + H2O = carbamoyl phosphate + L-glutamate + 2 ADP + phosphate + 2 H(+). It catalyses the reaction hydrogencarbonate + NH4(+) + 2 ATP = carbamoyl phosphate + 2 ADP + phosphate + 2 H(+). It participates in amino-acid biosynthesis; L-arginine biosynthesis; carbamoyl phosphate from bicarbonate: step 1/1. It functions in the pathway pyrimidine metabolism; UMP biosynthesis via de novo pathway; (S)-dihydroorotate from bicarbonate: step 1/3. Functionally, large subunit of the glutamine-dependent carbamoyl phosphate synthetase (CPSase). CPSase catalyzes the formation of carbamoyl phosphate from the ammonia moiety of glutamine, carbonate, and phosphate donated by ATP, constituting the first step of 2 biosynthetic pathways, one leading to arginine and/or urea and the other to pyrimidine nucleotides. The large subunit (synthetase) binds the substrates ammonia (free or transferred from glutamine from the small subunit), hydrogencarbonate and ATP and carries out an ATP-coupled ligase reaction, activating hydrogencarbonate by forming carboxy phosphate which reacts with ammonia to form carbamoyl phosphate. This is Carbamoyl phosphate synthase large chain from Clostridium perfringens (strain 13 / Type A).